The following is a 102-amino-acid chain: NADH-quinone oxidoreductase subunit K (102 aa).

3 helical membrane passes run 5–25 (LAHY…GIFL), 31–51 (IILL…FVAF), and 62–82 (VFVF…LAIL).

It belongs to the complex I subunit 4L family. NDH-1 is composed of 14 different subunits. Subunits NuoA, H, J, K, L, M, N constitute the membrane sector of the complex.

Its subcellular location is the cell inner membrane. It carries out the reaction a quinone + NADH + 5 H(+)(in) = a quinol + NAD(+) + 4 H(+)(out). In terms of biological role, NDH-1 shuttles electrons from NADH, via FMN and iron-sulfur (Fe-S) centers, to quinones in the respiratory chain. The immediate electron acceptor for the enzyme in this species is believed to be ubiquinone. Couples the redox reaction to proton translocation (for every two electrons transferred, four hydrogen ions are translocated across the cytoplasmic membrane), and thus conserves the redox energy in a proton gradient. The polypeptide is NADH-quinone oxidoreductase subunit K (Bordetella avium (strain 197N)).